Reading from the N-terminus, the 91-residue chain is Protein LURE 1.6 (91 aa).

An N-terminal signal peptide occupies residues 1–20 (MKLPFIFLITLLIFVSSCTS). Intrachain disulfides connect Cys59-Cys76, Cys62-Cys83, and Cys66-Cys85.

Belongs to the DEFL family. Expressed in the pistil. Detected in the synergid cells.

Its subcellular location is the secreted. Its function is as follows. Pollen tube attractants guiding pollen tubes to the ovular micropyle. The protein is Protein LURE 1.6 of Arabidopsis thaliana (Mouse-ear cress).